Consider the following 294-residue polypeptide: Shikimate dehydrogenase (NADP(+)) (294 aa).

Residues 14–16 (SKS) and T61 each bind shikimate. Residue K65 is the Proton acceptor of the active site. D77 lines the NADP(+) pocket. Residues N86 and D102 each contribute to the shikimate site. Residues 140-144 (GSGGA) and L235 contribute to the NADP(+) site. A shikimate-binding site is contributed by Y237. An NADP(+)-binding site is contributed by G259.

The protein belongs to the shikimate dehydrogenase family. As to quaternary structure, homodimer.

It carries out the reaction shikimate + NADP(+) = 3-dehydroshikimate + NADPH + H(+). It functions in the pathway metabolic intermediate biosynthesis; chorismate biosynthesis; chorismate from D-erythrose 4-phosphate and phosphoenolpyruvate: step 4/7. In terms of biological role, involved in the biosynthesis of the chorismate, which leads to the biosynthesis of aromatic amino acids. Catalyzes the reversible NADPH linked reduction of 3-dehydroshikimate (DHSA) to yield shikimate (SA). This is Shikimate dehydrogenase (NADP(+)) from Blochmanniella floridana.